The sequence spans 98 residues: Cystatin-B (98 aa).

The residue at position 1 (M1) is an N-acetylmethionine. Residues 46–50 carry the Secondary area of contact motif; that stretch reads QIVAG.

Belongs to the cystatin family. As to expression, widely expressed. Highest expression in heart, liver and kidney. Lower levels in brain, lung and skeletal muscle. Lowest levels in spleen and testis.

The protein localises to the cytoplasm. Functionally, this is an intracellular thiol proteinase inhibitor. In Mus musculus (Mouse), this protein is Cystatin-B (Cstb).